The primary structure comprises 493 residues: Xaa-Pro dipeptidase (493 aa).

A2 carries the post-translational modification N-acetylalanine. Phosphoserine is present on S167. H255 lines the a dipeptide pocket. Residues D276, D287, and H370 each coordinate Mn(2+). D287 serves as a coordination point for a dipeptide. Residues H377 and R398 each coordinate a dipeptide. The Mn(2+) site is built by E412 and E452.

It belongs to the peptidase M24B family. Eukaryotic-type prolidase subfamily. Homodimer. It depends on Mn(2+) as a cofactor.

It catalyses the reaction Xaa-L-Pro dipeptide + H2O = an L-alpha-amino acid + L-proline. In terms of biological role, dipeptidase that catalyzes the hydrolysis of dipeptides with a prolyl (Xaa-Pro) or hydroxyprolyl residue in the C-terminal position. The preferred dipeptide substrate is Gly-Pro, but other Xaa-Pro dipeptides, such as Ala-Pro, Met-Pro, Phe-Pro, Val-Pro and Leu-Pro, can be cleaved. Plays an important role in collagen metabolism because the high level of iminoacids in collagen. The sequence is that of Xaa-Pro dipeptidase (PEPD) from Pongo abelii (Sumatran orangutan).